Here is a 207-residue protein sequence, read N- to C-terminus: Guanylate kinase (207 aa).

The region spanning G4–R184 is the Guanylate kinase-like domain. A11–S18 contacts ATP.

This sequence belongs to the guanylate kinase family.

The protein localises to the cytoplasm. The catalysed reaction is GMP + ATP = GDP + ADP. Essential for recycling GMP and indirectly, cGMP. The protein is Guanylate kinase of Vibrio vulnificus (strain CMCP6).